A 374-amino-acid chain; its full sequence is Low-specificity L-threonine aldolase (374 aa).

N6-(pyridoxal phosphate)lysine is present on Lys-213. The disordered stretch occupies residues 354–374 (HPHKDDGRNNKKMYSLDAIKK).

This sequence belongs to the threonine aldolase family. Homotetramer. Requires pyridoxal 5'-phosphate as cofactor.

The enzyme catalyses L-threonine = acetaldehyde + glycine. It carries out the reaction L-allo-threonine = acetaldehyde + glycine. The protein operates within amino-acid degradation; L-threonine degradation via aldolase pathway; acetaldehyde and glycine from L-threonine: step 1/1. The polypeptide is Low-specificity L-threonine aldolase (GLY1) (Candida albicans (Yeast)).